A 1035-amino-acid chain; its full sequence is NACHT, LRR and PYD domains-containing protein 3 (1035 aa).

The Pyrin domain occupies 1 to 93 (MKMMSVRCKL…WEKAKKDQPE (93 aa)). Serine 5 carries the phosphoserine modification. Cysteines 8 and 106 form a disulfide. Tyrosine 13 is modified (phosphotyrosine). A lipid anchor (S-palmitoyl cysteine) is attached at cysteine 128. The segment at 129-132 (KKKK) is required for binding to phosphatidylinositol 4-phosphate (PtdIns4P). Phosphotyrosine occurs at positions 134 and 138. Residues 138 to 208 (YRRHVRSRFY…SSLKLELLFE (71 aa)) enclose the FISNA domain. A Phosphoserine modification is found at serine 159. Position 166 is a phosphotyrosine (tyrosine 166). An ATP-binding site is contributed by threonine 167. The residue at position 199 (serine 199) is a Phosphoserine. The NACHT domain maps to 218–534 (HTVVFQGAAG…EFFAAMYYLL (317 aa)). 224 to 231 (GAAGIGKT) contributes to the ATP binding site. Residues serine 263 and serine 293 each carry the phosphoserine modification. Lysine 322 participates in a covalent cross-link: Glycyl lysine isopeptide (Lys-Gly) (interchain with G-Cter in ubiquitin). The residue at position 332 (serine 332) is a Phosphoserine. The KFERQ-like motif 1 signature appears at 353–357 (LEKLQ). Lysine 428 participates in a covalent cross-link: Glycyl lysine isopeptide (Lys-Gly) (interchain with G-Cter in ubiquitin). Histidine 520 is an ATP binding site. Residues 603–607 (QVRLE) carry the KFERQ-like motif 2 motif. A Glycyl lysine isopeptide (Lys-Gly) (interchain with G-Cter in ubiquitin) cross-link involves residue lysine 689. Phosphoserine occurs at positions 727 and 734. 5 LRR repeats span residues 741-761 (SLTELDLSDNTLGDPGMRVLC), 770-791 (NIQRLWLGRCGLTHQCCFNISS), 798-818 (KLVELDLSDNALGDFGVRLLC), 827-848 (NLQKLWLVSCCLTSACCQDLAL), and 855-875 (SLTRLYIGENALGDSGVQVLC). The short motif at 797–801 (QKLVE) is the KFERQ-like motif 3 element. Serine 805 carries the phosphoserine modification. 3 S-palmitoyl cysteine lipidation sites follow: cysteine 836, cysteine 837, and cysteine 843. At tyrosine 860 the chain carries Phosphotyrosine. Lysine 877 participates in a covalent cross-link: Glycyl lysine isopeptide (Lys-Gly) (interchain with G-Cter in ubiquitin). LRR repeat units follow at residues 884 to 905 (NLQKLGLVNSGLTSLCCSALTS), 912 to 932 (NLTHLYLRSNALGDMGLKLLC), 941 to 962 (KLQMLELDNCSLTSHSCWDLST), and 969 to 990 (SLRKLNLSNNDLGDLCVVTLCE). The S-palmitoyl cysteine moiety is linked to residue cysteine 957. Lysine 972 participates in a covalent cross-link: Glycyl lysine isopeptide (Lys-Gly) (interchain with G-Cter in ubiquitin). Residues 990–994 (EVLKQ) carry the KFERQ-like motif 4 motif. Serine 1034 carries the post-translational modification Phosphoserine.

Belongs to the NLRP family. In terms of assembly, sensor component of NLRP3 inflammasomes; inflammasomes are supramolecular complexes that assemble in the cytosol in response to pathogens and other damage-associated signals and play critical roles in innate immunity and inflammation. The core of NLRP3 inflammasomes consists of a signal sensor component (NLRP3), an adapter (PYCARD/ASC), which recruits an effector pro-inflammatory caspase (CASP1 and, possibly, CASP4 and CASP5). Homodecamer; inactive NLRP3 forms homodecameric double-ring cages that hide pyrin domains within NACHT-LRR rings to avoid premature activation. Interacts (via pyrin domain) with PYCARD/ASC (via pyrin domain); interaction is direct. Interacts (via LRR repeat domain) with NEK7 (via N-terminus); the interaction is required for the formation of the complex NLRP3:PYCARD, oligomerization of PYCARD/ASC and activation of CASP1. Interacts (via LRR repeat domain) with NR4A1/Nur77 (via N-terminus); the interaction is direct, requires activation of NR4A1 by its ligands NBRE-containing dsDNA and lipopolysaccharide, and stimulates the association of NLRP3 with NEK7 for non-canonical NLRP3 inflammasome activation. Interacts with CARD8; leading to inhibit formation of the NLRP3 inflammasome. Interacts with MEFV; this interaction targets NLRP3 to degradation by autophagy, hence preventing excessive IL1B- and IL18-mediated inflammation. Interacts with EIF2AK2/PKR; this interaction requires EIF2AK2 activity, is accompanied by EIF2AK2 autophosphorylation and promotes inflammasome assembly in response to specific stimuli. Interacts with GBP5 (via DAPIN domain); this interaction promotes inflammasome assembly in response to microbial and soluble, but not crystalline, agents. Interacts with PML (isoform PML-1) (via the leucine-rich repeat (LRR) domain); PML-mediated increase in NLRP3 inflammasome activation does not depend upon this interaction. Interacts (via NACHT domain) with DHX33 (via DEAH box); NLRP3 activation in presence of cytosolic dsRNA is mediated by DHX33. Interacts (via NACHT and LRR domains) with ARRB2; this interaction is direct and inducible by polyunsaturated fatty acids (PUFAs). Interacts (via NACHT domain) with DDX3X under both LPS-primed and inflammasome-activating conditions. Interacts with IRF4 (via the LRR domain); this interaction is direct and is required for optimal IRF4 binding to IL4 promoter and efficient IL4 transactivation during differentiation of Th2 helper T-cells. Interacts with MAVS; promoting localization to mitochondria and activation of the NLRP3 inflammasome. Interacts with MARK4; promoting localization of NLRP3 to the microtubule organizing center (MTOC). Interacts with TRIM50; this interaction also promotes NLRP3 oligomerization and subsequent inflammasome activation. Interacts with IRGM; preventing NLRP3 inflammasome assembly and promoting NLRP3 degradation. Interacts (via NACHT and LLR domains) with ABHD8; this interaction is enhanced in the presence of NLRP3 inflammasome inducers, such as ATP, nigericin, silica, or alum. Interaction with ABHD8 leads the recruitment of ZDHHC12, hence facilitating NLRP3 palmitoylation and degradation by the chaperone-mediated autophagy pathway (CMA), therefore attenuating NLRP3 inflammasome activation. Post-translationally, phosphorylation by MAPK8/JNK1 increases inflammasome activation by promoting deubiquitination by BRCC3 and NLRP3 homooligomerization. Phosphorylation at Ser-805 by CSNK1A1 prevents inflammasome activation by preventing NEK7 recruitment. Phosphorylation at Ser-5 in the pyrin domain inhibits homomultimerization of NLRP3 and activation of the NLRP3 inflammasome: dephosphorylation by protein phosphatase 2A (PP2A) promotes assembly of the NLRP3 inflammasome. Phosphorylation at Ser-293 by PKD/PRKD1 promotes NLRP3 inflammasome assembly. Phosphorylation by ERK1/MAPK3 promotes NLRP3 inflammasome assembly. Phosphorylation by BTK (at Tyr-134, Tyr-138 and Tyr-166) in the region that mediates binding to phosphatidylinositol phosphate, promotes relocalization of NLRP3 and assembly of the NLRP3 inflammasome. Phosphorylation at Tyr-860 inhibits NLRP3 inflammasome assembly: dephosphorylation by PTPN22 promotes inflammasome activation. Phosphorylated by LATS1 and LATS2 at Ser-263 following palmitoylation by ZDHHC1, promoting its relocalization to the microtubule organizing center (MTOC), where NLRP3 is activated by NEK7, leading to inflammasome assembly and activation. In terms of processing, ubiquitinated; undergoes both 'Lys-48'- and 'Lys-63'-linked polyubiquitination. Ubiquitination does not lead to degradation, but inhibits inflammasome activation. Deubiquitination is catalyzed by BRCC3 and associated with NLRP3 activation and inflammasome assembly. This process can be induced by the activation of Toll-like receptors (by LPS), through a non-transcriptional pathway dependent on the mitochondrial production of reactive oxygen species, and by ATP. Ubiquitinated by TRIM31 via 'Lys-48'-linked ubiquitination, leading to its degradation by the proteasome. Ubiquitinated at Lys-689 by the SCF(FBXL2) complex, leading to its degradation by the proteasome. Ubiquitinated by TRIM35 via 'lys-48' and 'Lys-63'-linked ubiquitination leading to inhibition of NLRP3 inflammasome activation. Undergoes 'Lys-27'-linked polyubiquitination by MARCHF5, leading to NLRP3-NEK7 complex formation and NLRP3 oligomerization. The disulfide bond in the pyrin domain might play a role in reactive oxygen species-mediated activation. Post-translationally, palmitoylation by ZDHHC12 promotes NLRP3 degradation by the chaperone-mediated autophagy pathway (CMA) and therefore limits NLRP3 inflammasome activation. Interaction with ZDHHC12, and hence NLRP3 palmitoylation, is greatly enhanced by ABHD8. Following palmitoylation, HSPA8/HSC70 recognizes and binds the KFERQ-like motifs on NLRP3 and promotes NLRP3 recruitment to lysosomes, where it is degraded via the chaperone-mediated autophagy pathway in a LAMP2-dependent process. Palmitoylation at Cys-836 and Cys-837 by ZDHHC5 enhances its binding to NEK7 leading to inflammasome assembly and activation. Palmitoylation at Cys-128 and Cys-957 by ZDHHC1 facilitates phosphorylation at Ser-263 by LATS1 and LATS2, promoting its relocalization to the microtubule organizing center (MTOC), where NLRP3 is activated by NEK7, leading to inflammasome assembly and activation. Depalmitoylated by ABHD17A. In terms of processing, degraded via selective autophagy following interaction with IRGM. IRGM promotes NLRP3 recruitment to autophagosome membranes, promoting its SQSTM1/p62-dependent autophagy-dependent degradation.

It localises to the cytoplasm. Its subcellular location is the cytosol. The protein localises to the inflammasome. It is found in the cytoskeleton. The protein resides in the microtubule organizing center. It localises to the golgi apparatus membrane. Its subcellular location is the endoplasmic reticulum. The protein localises to the mitochondrion. It is found in the secreted. The protein resides in the nucleus. The enzyme catalyses ATP + H2O = ADP + phosphate + H(+). Under resting conditions, NLRP3 binds ADP and is autoinhibited. Inactive NLRP3 forms homodecameric double-ring cages that hide pyrin domains within NACHT-LRR rings to avoid premature activation. NLRP3 activation stimuli include extracellular ATP, nigericin, reactive oxygen species, crystals of monosodium urate or cholesterol, amyloid-beta fibers, environmental or industrial particles and nanoparticles, such as asbestos, silica, aluminum salts, cytosolic dsRNA, etc. Almost all stimuli trigger intracellular K(+) efflux. These stimuli lead to membrane perturbations that induce activation of NLRP3. Upon activation, NLRP3 is transported to microtubule organizing center (MTOC), where it is unlocked by NEK7, leading to its relocalization to dispersed trans-Golgi network (dTGN) vesicle membranes and recruitment of PYCARD/ASC for the formation of an active inflammasome complex. NEK7-activated NLRP3 forms a disk-shaped inflammasome. NLRP3 and PYCARD/ASC interact via their respective pyrin domains; interaction initiates speck formation (nucleation) which greatly enhances further addition of soluble PYCARD/ASC molecules to the speck in a prion-like polymerization process. Clustered PYCARD/ASC nucleates the formation of CASP1 filaments through the interaction of their respective CARD domains, acting as a platform for CASP1 polymerization and activation. Active CASP1 then processes IL1B and IL18 precursors, leading to the release of mature cytokines in the extracellular milieu and inflammatory response. NLRP3 inflammasome assembly is inhibited by IRGM, which impedes NLRP3 oligomerization. NLRP3 inflammasome is inhibited by cyclic AMP (cAMP), which directly binds NLRP3; inhibition is relieved by calcium-sensing receptor CASR, which inhibits production of cAMP. Specifically inhibited by sulfonylurea MCC950 (also named CP-456,773, CRID3), a potent and specific small-molecule inhibitor of the NLRP3 inflammasome that acts by preventing ATP hydrolysis. Functionally, sensor component of the NLRP3 inflammasome, which mediates inflammasome activation in response to defects in membrane integrity, leading to secretion of inflammatory cytokines IL1B and IL18 and pyroptosis. In response to pathogens and other damage-associated signals that affect the integrity of membranes, initiates the formation of the inflammasome polymeric complex composed of NLRP3, CASP1 and PYCARD/ASC. Recruitment of pro-caspase-1 (proCASP1) to the NLRP3 inflammasome promotes caspase-1 (CASP1) activation, which subsequently cleaves and activates inflammatory cytokines IL1B and IL18 and gasdermin-D (GSDMD), promoting cytokine secretion and pyroptosis. Activation of NLRP3 inflammasome is also required for HMGB1 secretion; stimulating inflammatory responses. Under resting conditions, ADP-bound NLRP3 is autoinhibited. NLRP3 activation stimuli include extracellular ATP, nigericin, reactive oxygen species, crystals of monosodium urate or cholesterol, amyloid-beta fibers, environmental or industrial particles and nanoparticles, such as asbestos, silica, aluminum salts, cytosolic dsRNA, etc. Almost all stimuli trigger intracellular K(+) efflux. These stimuli lead to membrane perturbation and activation of NLRP3. Upon activation, NLRP3 is transported to microtubule organizing center (MTOC), where it is unlocked by NEK7, leading to its relocalization to dispersed trans-Golgi network (dTGN) vesicle membranes and formation of an active inflammasome complex. Associates with dTGN vesicle membranes by binding to phosphatidylinositol 4-phosphate (PtdIns4P). Shows ATPase activity. Its function is as follows. Independently of inflammasome activation, regulates the differentiation of T helper 2 (Th2) cells and has a role in Th2 cell-dependent asthma and tumor growth. During Th2 differentiation, required for optimal IRF4 binding to IL4 promoter and for IRF4-dependent IL4 transcription. Binds to the consensus DNA sequence 5'-GRRGGNRGAG-3'. May also participate in the transcription of IL5, IL13, GATA3, CCR3, CCR4 and MAF. The polypeptide is NACHT, LRR and PYD domains-containing protein 3 (Rattus norvegicus (Rat)).